Consider the following 344-residue polypeptide: Hydrophobic dipeptide epimerase (344 aa).

Residues Thr126 and 151-153 each bind substrate; that span reads KIK. Mg(2+) is bound by residues Asp184, Glu210, and Asp235. Residues Lys257 and 307–309 contribute to the substrate site; that span reads DLD.

The protein belongs to the mandelate racemase/muconate lactonizing enzyme family. Mg(2+) is required as a cofactor.

Functionally, dipeptide epimerase with a preference for hydrophobic substrates. Catalyzes the epimerization of L-Ala-L-Thr, L-Ala-L-Met, L-Ala-L-His, L-Ala-L-Phe, L-Ala-L-Tyr, L-Ala-L-Trp, L-Ile-L-Ala, L-Ile-L-Ser, L-Ile-L-Met, L-Ile-L-His, L-Ile-L-Phe, L-Ile-L-Tyr, L-Ile-L-Trp, L-Phe-L-Met, L-Phe-L-His, L-Phe-L-Phe, L-Phe-L-Tyr, L-Phe-L-Trp, L-Phe-L-Ser, L-Phe-L-Thr and L-Phe-L-Lys (in vitro). This is Hydrophobic dipeptide epimerase from Roseobacter litoralis (strain ATCC 49566 / DSM 6996 / JCM 21268 / NBRC 15278 / OCh 149).